The following is a 473-amino-acid chain: Serine palmitoyltransferase 1 (473 aa).

The Lumenal portion of the chain corresponds to 1 to 15 (MATATEQWVLVEMVQ). An interaction with SPTLC2 region spans residues 1-66 (MATATEQWVL…KEELIEEWQP (66 aa)). A helical membrane pass occupies residues 16-36 (ALYEAPAYHLILEGILILWII). Residues 37-473 (RLLFSKTYKL…IKEVAQAVLL (437 aa)) lie on the Cytoplasmic side of the membrane. Residue tyrosine 164 is modified to Phosphotyrosine; by ABL.

It belongs to the class-II pyridoxal-phosphate-dependent aminotransferase family. Component of the serine palmitoyltransferase (SPT) complex, which is also composed of SPTLC2 or SPTLC3 and SPTSSA or SPTSSB. The heterodimer consisting of SPTLC1 and SPTLC2/SPTLC3 forms the catalytic core of the enzyme, while SPTSSA or SPTSSB subunits determine substrate specificity. SPT also interacts with ORMDL proteins, especially ORMDL3, which negatively regulate SPT activity in the presence of ceramides. Forms dimers of heterodimers with SPTLC2. Interacts with RTN4 (isoform B). The cofactor is pyridoxal 5'-phosphate. Post-translationally, phosphorylation at Tyr-164 inhibits activity and promotes cell survival. Widely expressed. Not detected in small intestine.

The protein localises to the endoplasmic reticulum membrane. The enzyme catalyses L-serine + hexadecanoyl-CoA + H(+) = 3-oxosphinganine + CO2 + CoA. It catalyses the reaction octadecanoyl-CoA + L-serine + H(+) = 3-oxoeicosasphinganine + CO2 + CoA. The catalysed reaction is tetradecanoyl-CoA + L-serine + H(+) = 3-oxohexadecasphinganine + CO2 + CoA. It carries out the reaction dodecanoyl-CoA + L-serine + H(+) = 3-oxotetradecasphinganine + CO2 + CoA. The protein operates within lipid metabolism; sphingolipid metabolism. SPT complex catalytic activity is negatively regulated by ORMDL proteins, including ORMDL3, in the presence of ceramides. This mechanism allows to maintain ceramide levels at sufficient concentrations for the production of complex sphingolipids, but which prevents the accumulation of ceramides to levels that trigger apoptosis. Functionally, component of the serine palmitoyltransferase multisubunit enzyme (SPT) that catalyzes the initial and rate-limiting step in sphingolipid biosynthesis by condensing L-serine and activated acyl-CoA (most commonly palmitoyl-CoA) to form long-chain bases. The SPT complex is also composed of SPTLC2 or SPTLC3 and SPTSSA or SPTSSB. Within this complex, the heterodimer with SPTLC2 or SPTLC3 forms the catalytic core. The composition of the serine palmitoyltransferase (SPT) complex determines the substrate preference. The SPTLC1-SPTLC2-SPTSSA complex shows a strong preference for C16-CoA substrate, while the SPTLC1-SPTLC3-SPTSSA isozyme uses both C14-CoA and C16-CoA as substrates, with a slight preference for C14-CoA. The SPTLC1-SPTLC2-SPTSSB complex shows a strong preference for C18-CoA substrate, while the SPTLC1-SPTLC3-SPTSSB isozyme displays an ability to use a broader range of acyl-CoAs, without apparent preference. Required for adipocyte cell viability and metabolic homeostasis. The chain is Serine palmitoyltransferase 1 (SPTLC1) from Homo sapiens (Human).